Reading from the N-terminus, the 690-residue chain is uncharacterized protein (690 aa).

A disordered region spans residues 553-601; that stretch reads DESELLENEDKSESLENEDKSESLENEDKSESLENEDKSESLENEKKEK. A compositionally biased stretch (basic and acidic residues) spans 560-601; that stretch reads NEDKSESLENEDKSESLENEDKSESLENEDKSESLENEKKEK.

The protein belongs to the glycosyltransferase 2 family.

This is an uncharacterized protein from Rickettsia bellii (strain RML369-C).